Here is a 366-residue protein sequence, read N- to C-terminus: tRNA-specific 2-thiouridylase MnmA (366 aa).

Residues Ala-6–Ser-13 and Leu-32 each bind ATP. The Nucleophile role is filled by Cys-101. The cysteines at positions 101 and 198 are disulfide-linked. Gly-125 lines the ATP pocket. The interval Lys-148–Gln-150 is interaction with tRNA. Catalysis depends on Cys-198, which acts as the Cysteine persulfide intermediate.

It belongs to the MnmA/TRMU family.

The protein localises to the cytoplasm. It catalyses the reaction S-sulfanyl-L-cysteinyl-[protein] + uridine(34) in tRNA + AH2 + ATP = 2-thiouridine(34) in tRNA + L-cysteinyl-[protein] + A + AMP + diphosphate + H(+). Catalyzes the 2-thiolation of uridine at the wobble position (U34) of tRNA, leading to the formation of s(2)U34. This Nocardioides sp. (strain ATCC BAA-499 / JS614) protein is tRNA-specific 2-thiouridylase MnmA.